The chain runs to 71 residues: Venom peptide 2-long (71 aa).

The first 24 residues, methionine 1 to alanine 24, serve as a signal peptide directing secretion. AXPX repeat units lie at residues alanine 24–alanine 27, alanine 32–glycine 35, alanine 44–glutamate 47, alanine 50–glutamate 53, and alanine 54–isoleucine 57. A propeptide spanning residues valine 25–alanine 54 is cleaved from the precursor. Leucine 68 bears the Leucine amide mark.

This sequence belongs to the MCD family. Protonectin subfamily. In terms of tissue distribution, expressed by the venom gland.

It localises to the secreted. The protein localises to the target cell membrane. Functionally, antimicrobial peptide with strong activity against the fungus B.cinerea (MIC=0.5 ug/ml), and poor activities against the fungus C.albicans (MIC=100 ug/ml), the Gram-positive bacterium S.aureus (MIC=125 ug/ml) and the Gram-negative bacterium E.coli (MIC=125 ug/ml). Its function is as follows. Antimicrobial peptide with strong activity against the fungus B.cinerea (MIC=0.4 uM), and poor activities against the fungus C.albicans (MIC=16 uM), the Gram-positive bacterium S.aureus (MIC=20 uM) and the Gram-negative bacterium E.coli (MIC=79 uM). Shows cytolytic activity against insect cell lines. Has potent hemolytic activity against ovine erythrocytes. Has potent hemolytic activity against human erythrocytes (EC(50)=31 uM). In vivo, peptide injection in the vicinity of the head and thorax of lepidopteran larvae induces feeding disorder followed by death due to starvation. The chain is Venom peptide 2-long from Orancistrocerus drewseni (Solitary wasp).